A 91-amino-acid chain; its full sequence is Potassium channel toxin BmTXK-beta-2 (91 aa).

The first 19 residues, 1 to 19 (MQRNLVVLLFLGMVALSSC), serve as a signal peptide directing secretion. A propeptide spanning residues 20–27 (GLREKHFQ) is cleaved from the precursor. In terms of domain architecture, BetaSPN-type CS-alpha/beta spans 54 to 91 (QFGCPAYQGYCDDHCQDIKKEEGFCHGFKCKCGIPMGF). 3 cysteine pairs are disulfide-bonded: Cys-57/Cys-78, Cys-64/Cys-83, and Cys-68/Cys-85.

This sequence belongs to the long chain scorpion toxin family. Class 1 subfamily. As to expression, expressed by the venom gland.

Its subcellular location is the secreted. Functionally, inhibits voltage-gated potassium channel. The polypeptide is Potassium channel toxin BmTXK-beta-2 (Olivierus martensii (Manchurian scorpion)).